A 110-amino-acid polypeptide reads, in one-letter code: Large ribosomal subunit protein P1B (110 aa).

Over residues 69 to 85 (PAAGGAGAPAAAAGGEA) the composition is skewed to low complexity. The interval 69 to 110 (PAAGGAGAPAAAAGGEAAAEEQKEEAKEEEESDEDMGFGLFD) is disordered. A compositionally biased stretch (acidic residues) spans 95–104 (KEEEESDEDM).

The protein belongs to the eukaryotic ribosomal protein P1/P2 family. As to quaternary structure, component of the large ribosomal subunit (LSU). Mature yeast ribosomes consist of a small (40S) and a large (60S) subunit. The 40S small subunit contains 1 molecule of ribosomal RNA (18S rRNA) and at least 33 different proteins. The large 60S subunit contains 3 rRNA molecules (25S, 5.8S and 5S rRNA) and at least 46 different proteins. The acidic ribosomal P-proteins form the stalk structure of the 60S subunit. They are organized as a pentameric complex in which uL10/P0 interacts with 2 heterodimers of P1 and P2 proteins.

It is found in the cytoplasm. Component of the ribosome, a large ribonucleoprotein complex responsible for the synthesis of proteins in the cell. The small ribosomal subunit (SSU) binds messenger RNAs (mRNAs) and translates the encoded message by selecting cognate aminoacyl-transfer RNA (tRNA) molecules. The large subunit (LSU) contains the ribosomal catalytic site termed the peptidyl transferase center (PTC), which catalyzes the formation of peptide bonds, thereby polymerizing the amino acids delivered by tRNAs into a polypeptide chain. The nascent polypeptides leave the ribosome through a tunnel in the LSU and interact with protein factors that function in enzymatic processing, targeting, and the membrane insertion of nascent chains at the exit of the ribosomal tunnel. This is Large ribosomal subunit protein P1B (rpp102) from Schizosaccharomyces pombe (strain 972 / ATCC 24843) (Fission yeast).